Here is a 212-residue protein sequence, read N- to C-terminus: MTICGVDEAGKGPVLGPMITAGVLVSDMSELEMLGIKDSKKLSPKKRESLFEEITFSWKTYTVVRTPFDIDSREGTMNAFTASCHADVVRALCADFVYLDACDVNAKRFGENVLRLSGSSAHVCSEHKADAKYAVVGAASIVAKVTRDRCIADLKEEYGEIGSGYPSDPATISFLTEYIRTRGEVPLCARRSWQTVQDILDRASQTGLSDFF.

Positions 1 to 205 (MTICGVDEAG…VQDILDRASQ (205 aa)) constitute an RNase H type-2 domain. Residues D7, E8, and D100 each coordinate a divalent metal cation.

Belongs to the RNase HII family. Mn(2+) is required as a cofactor. Mg(2+) serves as cofactor.

It localises to the cytoplasm. It carries out the reaction Endonucleolytic cleavage to 5'-phosphomonoester.. Endonuclease that specifically degrades the RNA of RNA-DNA hybrids. This chain is Ribonuclease HII, found in Methanocorpusculum labreanum (strain ATCC 43576 / DSM 4855 / Z).